Consider the following 379-residue polypeptide: UDP-N-acetylglucosamine--N-acetylmuramyl-(pentapeptide) pyrophosphoryl-undecaprenol N-acetylglucosamine transferase (379 aa).

UDP-N-acetyl-alpha-D-glucosamine-binding positions include 10 to 12 (TAG), N124, R161, S195, and Q291.

The protein belongs to the glycosyltransferase 28 family. MurG subfamily.

The protein localises to the cell membrane. It carries out the reaction di-trans,octa-cis-undecaprenyl diphospho-N-acetyl-alpha-D-muramoyl-L-alanyl-D-glutamyl-meso-2,6-diaminopimeloyl-D-alanyl-D-alanine + UDP-N-acetyl-alpha-D-glucosamine = di-trans,octa-cis-undecaprenyl diphospho-[N-acetyl-alpha-D-glucosaminyl-(1-&gt;4)]-N-acetyl-alpha-D-muramoyl-L-alanyl-D-glutamyl-meso-2,6-diaminopimeloyl-D-alanyl-D-alanine + UDP + H(+). Its pathway is cell wall biogenesis; peptidoglycan biosynthesis. Cell wall formation. Catalyzes the transfer of a GlcNAc subunit on undecaprenyl-pyrophosphoryl-MurNAc-pentapeptide (lipid intermediate I) to form undecaprenyl-pyrophosphoryl-MurNAc-(pentapeptide)GlcNAc (lipid intermediate II). The protein is UDP-N-acetylglucosamine--N-acetylmuramyl-(pentapeptide) pyrophosphoryl-undecaprenol N-acetylglucosamine transferase of Thermobifida fusca (strain YX).